An 898-amino-acid chain; its full sequence is Netrin receptor UNC5A (898 aa).

Positions 1–25 are cleaved as a signal peptide; that stretch reads MAVRPGLWPVLLGIVLAAWLRGSGA. The Extracellular portion of the chain corresponds to 26–361; that stretch reads QQSATVANPV…TASCPEDVAL (336 aa). An Ig-like domain is found at 44 to 141; the sequence is PHFLVEPEDV…SGTTKSQKAY (98 aa). 3 disulfide bridges follow: Cys-65-Cys-126, Cys-77-Cys-124, and Cys-170-Cys-221. N-linked (GlcNAc...) asparagine glycans are attached at residues Asn-107 and Asn-218. An Ig-like C2-type domain is found at 155–238; that stretch reads PLAKEVSLEQ…RRRSTSAAVI (84 aa). 2 TSP type-1 domains span residues 242–296 and 298–350; these read NGGW…TLCP and DGSW…DLCL. Residues Trp-245, Trp-248, and Trp-251 are each glycosylated (C-linked (Man) tryptophan). 3 disulfide bridges follow: Cys-254-Cys-291, Cys-258-Cys-295, and Cys-269-Cys-281. 2 C-linked (Man) tryptophan glycosylation sites follow: Trp-301 and Trp-304. 3 disulfide bridges follow: Cys-310-Cys-344, Cys-314-Cys-349, and Cys-322-Cys-334. N-linked (GlcNAc...) asparagine glycosylation occurs at Asn-343. Residues 362-382 form a helical membrane-spanning segment; sequence YIGLVAVAVCLFLLLLALGLI. Residues 383–898 are Cytoplasmic-facing; that stretch reads YCRKKEGLDS…GLFTVSEAEC (516 aa). Positions 497–640 constitute a ZU5 domain; the sequence is NMAYGTFNFL…LGRFALVGEA (144 aa). The interaction with DCC stretch occupies residues 661–679; it reads SLEYNIRVYCLHDTHDALK. The 81-residue stretch at 817 to 897 folds into the Death domain; sequence QKIIASLDPP…AGLFTVSEAE (81 aa).

The protein belongs to the unc-5 family. In terms of assembly, homodimer and homooligomer. Interacts with the cytoplasmic part of DCC. Interacts with MAGED1. Interacts with PRKCABP, possibly mediating some interaction with PKC. Interacts (via extracellular domain) with FLRT2 (via extracellular domain). Interacts (via extracellular domain) with FLRT3 (via extracellular domain). In terms of processing, phosphorylated on cytoplasmic tyrosine residues. Phosphorylated by PKC in vitro. Proteolytically cleaved by caspases during apoptosis. The cleavage does not take place when the receptor is associated with netrin ligand. Its cleavage by caspases is required to induce apoptosis. Post-translationally, the two extracellular TSRs of UNC5A contain WxxWxxWxxC motifs that can be C-mannosylated on all tryptophans. DPY19L1 preferentially mannosylates the first two tryptophans and DPY19L3 prefers the third. C-mannosylation by DPY19L1 is required for transport of UNC5A from the endoplasmic reticulum to the cell surface. Mainly expressed in regions of differentiating neurons. Expressed at early stages of neural tube development in the ventral spinal cord. In developing hindbrain, it colocalizes with a number of cranial motor neuron subpopulations from embryonic E11 to E14, while DCC is expressed by motor neurons at E12. Also expressed in non-neural structures, such as the basal plane of the hindbrain and midbrain, in the developing hypothalamus, thalamus and in the pallidum.

It localises to the cell membrane. The protein localises to the membrane raft. Its subcellular location is the cell projection. The protein resides in the neuron projection. Its function is as follows. Receptor for netrin required for axon guidance. Functions in the netrin signaling pathway and promotes neurite outgrowth in response to NTN1. Mediates axon repulsion of neuronal growth cones in the developing nervous system in response to netrin. Axon repulsion in growth cones may be mediated by its association with DCC that may trigger signaling for repulsion. It also acts as a dependence receptor required for apoptosis induction when not associated with netrin ligand. The polypeptide is Netrin receptor UNC5A (Unc5a) (Rattus norvegicus (Rat)).